Here is a 48-residue protein sequence, read N- to C-terminus: Large ribosomal subunit protein bL32c (48 aa).

Belongs to the bacterial ribosomal protein bL32 family.

Its subcellular location is the plastid. The protein resides in the chloroplast. The sequence is that of Large ribosomal subunit protein bL32c (rpl32) from Vicia faba (Broad bean).